The chain runs to 112 residues: MADFSRLPGPNADLWDWQLLAACRGVDSSLFFHPEGERGAARSARENSAKEVCMRCPVRAECAAHALAVREPYGVWGGLTEDEREELMGRARNRLVAATASASAGGEAAGPH.

One can recognise a 4Fe-4S Wbl-type domain in the interval 22–86 (ACRGVDSSLF…GGLTEDEREE (65 aa)). The [4Fe-4S] cluster site is built by Cys23, Cys53, Cys56, and Cys62.

This sequence belongs to the WhiB family. In terms of assembly, the 4Fe-4S form is a monomer; upon oxidation forms a disulfide-bonded homodimer. It depends on [4Fe-4S] cluster as a cofactor. Can be nitrosylated by NO, 8 NO react per cluster. These complexes are quite stable under anaerobic conditions, but degrade slowly aerobically. In terms of processing, upon Fe-S cluster removal intramolecular disulfide bonds are formed.

Its subcellular location is the cytoplasm. Acts as a transcriptional regulator. Probably redox-responsive. The apo- but not holo-form probably binds DNA. Plays a positive role in prespore maturation and the initiation of sporulation septation. This is Transcriptional regulator WhiD (whiD) from Streptomyces coelicolor (strain ATCC BAA-471 / A3(2) / M145).